A 205-amino-acid chain; its full sequence is Holliday junction branch migration complex subunit RuvA (205 aa).

Residues 1-65 are domain I; the sequence is MIGRLRGAVA…SAGLRLYGFL (65 aa). A domain II region spans residues 66–144; the sequence is TREDRRAFVL…TDGPVLMSAP (79 aa). Residues 145-153 are flexible linker; it reads TSSAPSAPA. Residues 153 to 205 are domain III; sequence AKPAPTGDAVAALMGLGVAEVNARRVVEAAAAELGEEATVQALIKAGLKELGR.

The protein belongs to the RuvA family. As to quaternary structure, homotetramer. Forms an RuvA(8)-RuvB(12)-Holliday junction (HJ) complex. HJ DNA is sandwiched between 2 RuvA tetramers; dsDNA enters through RuvA and exits via RuvB. An RuvB hexamer assembles on each DNA strand where it exits the tetramer. Each RuvB hexamer is contacted by two RuvA subunits (via domain III) on 2 adjacent RuvB subunits; this complex drives branch migration. In the full resolvosome a probable DNA-RuvA(4)-RuvB(12)-RuvC(2) complex forms which resolves the HJ.

It localises to the cytoplasm. Its function is as follows. The RuvA-RuvB-RuvC complex processes Holliday junction (HJ) DNA during genetic recombination and DNA repair, while the RuvA-RuvB complex plays an important role in the rescue of blocked DNA replication forks via replication fork reversal (RFR). RuvA specifically binds to HJ cruciform DNA, conferring on it an open structure. The RuvB hexamer acts as an ATP-dependent pump, pulling dsDNA into and through the RuvAB complex. HJ branch migration allows RuvC to scan DNA until it finds its consensus sequence, where it cleaves and resolves the cruciform DNA. The sequence is that of Holliday junction branch migration complex subunit RuvA from Caulobacter vibrioides (strain ATCC 19089 / CIP 103742 / CB 15) (Caulobacter crescentus).